Here is a 475-residue protein sequence, read N- to C-terminus: Aspartyl/glutamyl-tRNA(Asn/Gln) amidotransferase subunit B (475 aa).

Belongs to the GatB/GatE family. GatB subfamily. As to quaternary structure, heterotrimer of A, B and C subunits.

The enzyme catalyses L-glutamyl-tRNA(Gln) + L-glutamine + ATP + H2O = L-glutaminyl-tRNA(Gln) + L-glutamate + ADP + phosphate + H(+). It carries out the reaction L-aspartyl-tRNA(Asn) + L-glutamine + ATP + H2O = L-asparaginyl-tRNA(Asn) + L-glutamate + ADP + phosphate + 2 H(+). Allows the formation of correctly charged Asn-tRNA(Asn) or Gln-tRNA(Gln) through the transamidation of misacylated Asp-tRNA(Asn) or Glu-tRNA(Gln) in organisms which lack either or both of asparaginyl-tRNA or glutaminyl-tRNA synthetases. The reaction takes place in the presence of glutamine and ATP through an activated phospho-Asp-tRNA(Asn) or phospho-Glu-tRNA(Gln). This chain is Aspartyl/glutamyl-tRNA(Asn/Gln) amidotransferase subunit B, found in Bacillus cereus (strain G9842).